An 874-amino-acid polypeptide reads, in one-letter code: Dynein regulatory complex subunit 7 (874 aa).

Coiled-coil stretches lie at residues 1 to 67 (MEVL…SAEL) and 257 to 297 (RFEQ…DALH). Over residues 386-400 (TEEDDSGINDEDDVE) the composition is skewed to acidic residues. Residues 386–410 (TEEDDSGINDEDDVENLGKEDEDKS) form a disordered region. Over residues 401–410 (NLGKEDEDKS) the composition is skewed to basic and acidic residues. Coiled coils occupy residues 688–711 (QVWE…AAHT) and 781–807 (KQRL…KKQQ).

This sequence belongs to the DRC7 family. As to quaternary structure, component of the nexin-dynein regulatory complex (N-DRC). Interacts with TCTE1/DRC5. Interacts with DRC3 and GAS8/DRC4.

Its subcellular location is the cell projection. It is found in the cilium. The protein localises to the flagellum. It localises to the cytoplasm. The protein resides in the cytoskeleton. Its subcellular location is the cilium axoneme. It is found in the flagellum axoneme. Component of the nexin-dynein regulatory complex (N-DRC) a key regulator of ciliary/flagellar motility which maintains the alignment and integrity of the distal axoneme and regulates microtubule sliding in motile axonemes. Involved in the regulation of flagellar motility. Essential for male fertility, sperm head morphogenesis and sperm flagellum formation. This is Dynein regulatory complex subunit 7 (DRC7) from Homo sapiens (Human).